Here is a 335-residue protein sequence, read N- to C-terminus: Pregnancy-specific beta-1-glycoprotein 2 (335 aa).

The signal sequence occupies residues 1–34; that stretch reads MGPLSAPPCTEHIKWKGLLVTASLLNFWNLPTTA. Residues 35–144 enclose the Ig-like V-type domain; it reads QVTIEAQPPK…TGYFTFTLYL (110 aa). Residues Asn-61, Asn-104, Asn-111, and Asn-199 are each glycosylated (N-linked (GlcNAc...) asparagine). 2 consecutive Ig-like C2-type domains span residues 147-234 and 239-317; these read PKPS…VTLN and PDLP…TSLT. 2 cysteine pairs are disulfide-bonded: Cys-169–Cys-217 and Cys-261–Cys-301.

This sequence belongs to the immunoglobulin superfamily. CEA family.

The protein resides in the secreted. The polypeptide is Pregnancy-specific beta-1-glycoprotein 2 (PSG2) (Homo sapiens (Human)).